The following is a 100-amino-acid chain: Aspartyl/glutamyl-tRNA(Asn/Gln) amidotransferase subunit C (100 aa).

Belongs to the GatC family. In terms of assembly, heterotrimer of A, B and C subunits.

The catalysed reaction is L-glutamyl-tRNA(Gln) + L-glutamine + ATP + H2O = L-glutaminyl-tRNA(Gln) + L-glutamate + ADP + phosphate + H(+). It carries out the reaction L-aspartyl-tRNA(Asn) + L-glutamine + ATP + H2O = L-asparaginyl-tRNA(Asn) + L-glutamate + ADP + phosphate + 2 H(+). Functionally, allows the formation of correctly charged Asn-tRNA(Asn) or Gln-tRNA(Gln) through the transamidation of misacylated Asp-tRNA(Asn) or Glu-tRNA(Gln) in organisms which lack either or both of asparaginyl-tRNA or glutaminyl-tRNA synthetases. The reaction takes place in the presence of glutamine and ATP through an activated phospho-Asp-tRNA(Asn) or phospho-Glu-tRNA(Gln). In Streptococcus agalactiae serotype III (strain NEM316), this protein is Aspartyl/glutamyl-tRNA(Asn/Gln) amidotransferase subunit C.